A 210-amino-acid chain; its full sequence is Thymidylate kinase (210 aa).

10-17 (GLEGAGKS) is an ATP binding site.

This sequence belongs to the thymidylate kinase family.

It catalyses the reaction dTMP + ATP = dTDP + ADP. Its function is as follows. Phosphorylation of dTMP to form dTDP in both de novo and salvage pathways of dTTP synthesis. This Haemophilus influenzae (strain PittEE) protein is Thymidylate kinase.